Reading from the N-terminus, the 322-residue chain is Protein mono-ADP-ribosyltransferase PARP16 (322 aa).

The Cytoplasmic portion of the chain corresponds to 1–287; it reads MQPSGWAAAR…RASSQLSWFS (287 aa). A PARP alpha-helical domain is found at 5-91; it reads GWAAAREAAG…AWDLVSWILS (87 aa). The residue at position 37 (Asp37) is an ADP-ribosyl aspartic acid. An ADP-ribosyl glutamic acid modification is found at Glu70. Residues 94-279 enclose the PARP catalytic domain; that stretch reads VLTIHSAGKA…VYSQKPPKRA (186 aa). N6-(ADP-ribosyl)lysine is present on residues Lys110 and Lys137. Residues His152, Tyr182, and Tyr254 each contribute to the NAD(+) site. Residues 288–308 form a helical membrane-spanning segment; that stretch reads SHWFTVMISLYLLLLLIVSVI. Topologically, residues 309–322 are lumenal; the sequence is NSSAFQHFWNRAKR.

This sequence belongs to the ARTD/PARP family. Interacts with KPNB1. Auto-mono-ADP-ribosylated.

The protein resides in the endoplasmic reticulum membrane. It catalyses the reaction L-aspartyl-[protein] + NAD(+) = 4-O-(ADP-D-ribosyl)-L-aspartyl-[protein] + nicotinamide. The enzyme catalyses L-glutamyl-[protein] + NAD(+) = 5-O-(ADP-D-ribosyl)-L-glutamyl-[protein] + nicotinamide. The catalysed reaction is L-lysyl-[protein] + NAD(+) = N(6)-(ADP-D-ribosyl)-L-lysyl-[protein] + nicotinamide + H(+). With respect to regulation, in absence of activation signal, PARP16 is autoinhibited by the PARP alpha-helical domain (also named HD region), which prevents effective NAD(+)-binding. Activity is highly stimulated by signals, which unfold the PARP alpha-helical domain, relieving autoinhibition. Functionally, intracellular mono-ADP-ribosyltransferase that plays a role in different processes, such as protein translation and unfolded protein response (UPR), through the mono-ADP-ribosylation of proteins involved in those processes. Acts as an inhibitor of protein translation by catalyzing mono-ADP-ribosylation of ribosomal subunits, such as RPL14 and RPS6, thereby inhibiting polysome assembly and mRNA loading. Mono-ADP-ribosylation of ribosomal subunits is promoted by NMNAT2. Involved in the unfolded protein response (UPR) by ADP-ribosylating and activating EIF2AK3 and ERN1, two important UPR effectors. May also mediate mono-ADP-ribosylation of karyopherin KPNB1 a nuclear import factor. May not modify proteins on arginine or cysteine residues compared to other mono-ADP-ribosyltransferases. The sequence is that of Protein mono-ADP-ribosyltransferase PARP16 from Homo sapiens (Human).